A 105-amino-acid polypeptide reads, in one-letter code: Sulfite reductase, dissimilatory-type subunit gamma (105 aa).

It belongs to the DsrC/TusE family. As to quaternary structure, heterohexamer of two alpha, two beta and two gamma subunits.

The protein localises to the cytoplasm. The catalysed reaction is [DsrC protein]-trisulfide + NAD(+) + 3 H2O = [DsrC protein]-dithiol + sulfite + NADH + 3 H(+). Functionally, catalyzes the reduction of sulfite to sulfide. This is the terminal oxidation reaction in sulfate respiration, a process catalyzed by the sulfate-reducing bacteria. In Nitratidesulfovibrio vulgaris (strain ATCC 29579 / DSM 644 / CCUG 34227 / NCIMB 8303 / VKM B-1760 / Hildenborough) (Desulfovibrio vulgaris), this protein is Sulfite reductase, dissimilatory-type subunit gamma (dsvC).